A 29-amino-acid chain; its full sequence is Potassium channel toxin alpha-KTx 8.4 (29 aa).

Disulfide bonds link cysteine 3/cysteine 19, cysteine 6/cysteine 24, and cysteine 10/cysteine 26.

This sequence belongs to the short scorpion toxin superfamily. Potassium channel inhibitor family. Alpha-KTx 08 subfamily. In terms of tissue distribution, expressed by the venom gland.

It localises to the secreted. Inhibits voltage-gated potassium channels. The protein is Potassium channel toxin alpha-KTx 8.4 of Leiurus hebraeus (Hebrew deathstalker scorpion).